The chain runs to 534 residues: CTP synthase (534 aa).

Residues 1–267 (MTKYIFVTGG…GDLIIERLAL (267 aa)) form an amidoligase domain region. Residue serine 13 coordinates CTP. Serine 13 contributes to the UTP binding site. ATP is bound at residue 14–19 (SVGKGI). Tyrosine 54 contacts L-glutamine. Position 71 (aspartate 71) interacts with ATP. Aspartate 71 and glutamate 141 together coordinate Mg(2+). Residues 148–150 (DIE), 188–193 (KTKPTQ), and lysine 224 each bind CTP. Residues 188–193 (KTKPTQ) and lysine 224 each bind UTP. The region spanning 292–534 (TVAIVGKYVE…VQAALEQIAE (243 aa)) is the Glutamine amidotransferase type-1 domain. Residue glycine 354 coordinates L-glutamine. Cysteine 381 acts as the Nucleophile; for glutamine hydrolysis in catalysis. L-glutamine-binding positions include 382 to 385 (LGMQ), glutamate 405, and arginine 462. Catalysis depends on residues histidine 507 and glutamate 509.

Belongs to the CTP synthase family. As to quaternary structure, homotetramer.

It carries out the reaction UTP + L-glutamine + ATP + H2O = CTP + L-glutamate + ADP + phosphate + 2 H(+). The enzyme catalyses L-glutamine + H2O = L-glutamate + NH4(+). The catalysed reaction is UTP + NH4(+) + ATP = CTP + ADP + phosphate + 2 H(+). It functions in the pathway pyrimidine metabolism; CTP biosynthesis via de novo pathway; CTP from UDP: step 2/2. Its activity is regulated as follows. Allosterically activated by GTP, when glutamine is the substrate; GTP has no effect on the reaction when ammonia is the substrate. The allosteric effector GTP functions by stabilizing the protein conformation that binds the tetrahedral intermediate(s) formed during glutamine hydrolysis. Inhibited by the product CTP, via allosteric rather than competitive inhibition. Catalyzes the ATP-dependent amination of UTP to CTP with either L-glutamine or ammonia as the source of nitrogen. Regulates intracellular CTP levels through interactions with the four ribonucleotide triphosphates. This Herpetosiphon aurantiacus (strain ATCC 23779 / DSM 785 / 114-95) protein is CTP synthase.